The chain runs to 144 residues: Large ribosomal subunit protein uL15 (144 aa).

Residues 1–10 (MYLNTISPSR) are compositionally biased toward polar residues. Residues 1–51 (MYLNTISPSRGSKHLSKRVGRGIGSGLGKTGGRGHKGQKSRSGGKVRLGFE) form a disordered region. Residues 11-20 (GSKHLSKRVG) are compositionally biased toward basic residues. The span at 21-31 (RGIGSGLGKTG) shows a compositional bias: gly residues. The span at 32-44 (GRGHKGQKSRSGG) shows a compositional bias: basic residues.

It belongs to the universal ribosomal protein uL15 family. Part of the 50S ribosomal subunit.

Its function is as follows. Binds to the 23S rRNA. This Blochmanniella pennsylvanica (strain BPEN) protein is Large ribosomal subunit protein uL15.